The primary structure comprises 173 residues: MNALQWSFRAQCLTGFLFCTGLLAYAIFLQLHQGLEPCPLCIFQRIAFAVLGILFLIAGLYNSSNVYTRKAYGLLIFLTAAIGTGIAGRHVWVQLMPHNTISSCGSPLSFLSETMGPFEVFRTVLTGTSDCGNIDWRFLGLSMPMWSMFWFVALALLGLLVGFKAERRKPLFS.

The Cytoplasmic portion of the chain corresponds to 1–11 (MNALQWSFRAQ). Residues 12-28 (CLTGFLFCTGLLAYAIF) form a helical membrane-spanning segment. Topologically, residues 29–46 (LQLHQGLEPCPLCIFQRI) are periplasmic. An intrachain disulfide couples cysteine 38 to cysteine 41. The chain crosses the membrane as a helical span at residues 47–63 (AFAVLGILFLIAGLYNS). Over 64 to 70 (SNVYTRK) the chain is Cytoplasmic. A helical transmembrane segment spans residues 71-88 (AYGLLIFLTAAIGTGIAG). The Periplasmic segment spans residues 89-145 (RHVWVQLMPHNTISSCGSPLSFLSETMGPFEVFRTVLTGTSDCGNIDWRFLGLSMPM). Cysteine 104 and cysteine 131 are oxidised to a cystine. A helical membrane pass occupies residues 146 to 164 (WSMFWFVALALLGLLVGFK). Topologically, residues 165 to 173 (AERRKPLFS) are cytoplasmic.

It belongs to the DsbB family.

The protein resides in the cell inner membrane. Required for disulfide bond formation in some periplasmic proteins. Acts by oxidizing the DsbA protein. The chain is Disulfide bond formation protein B from Xylella fastidiosa (strain 9a5c).